Here is a 362-residue protein sequence, read N- to C-terminus: 3-isopropylmalate dehydrogenase (362 aa).

78 to 91 (GPKWEHLAPNDQPE) provides a ligand contact to NAD(+). Positions 99, 109, 138, and 227 each coordinate substrate. Mg(2+) is bound by residues aspartate 227, aspartate 251, and aspartate 255. NAD(+) is bound at residue 285–297 (GSAPDIAGKNIAN).

It belongs to the isocitrate and isopropylmalate dehydrogenases family. LeuB type 1 subfamily. In terms of assembly, homodimer. It depends on Mg(2+) as a cofactor. Mn(2+) serves as cofactor.

The protein resides in the cytoplasm. The catalysed reaction is (2R,3S)-3-isopropylmalate + NAD(+) = 4-methyl-2-oxopentanoate + CO2 + NADH. The protein operates within amino-acid biosynthesis; L-leucine biosynthesis; L-leucine from 3-methyl-2-oxobutanoate: step 3/4. In terms of biological role, catalyzes the oxidation of 3-carboxy-2-hydroxy-4-methylpentanoate (3-isopropylmalate) to 3-carboxy-4-methyl-2-oxopentanoate. The product decarboxylates to 4-methyl-2 oxopentanoate. The sequence is that of 3-isopropylmalate dehydrogenase from Photobacterium profundum (strain SS9).